Reading from the N-terminus, the 416-residue chain is MRTEIISIGNELLQGQILDSNAQHISTALSQIGLKVMQITVLPDEIEAIVEALAATKQRSCKIVITTGGLGPTSDDVTKEALAKYLDCPAVVFSKERLSNLGGVDTPVIQYLERATNSSVNISDLQLGGIKNVLGTAPGIYCKQNNQILIVLPGVPTEMQAMLRDTVLPYLQSNFTLPIFYQKTICTIGISEEEIAAILAPWESRLPAPIKLAYLPDLATVKITLAATVPTWEESKRLVEEEFLRVLPLIEPYVYGYNTDTIEEVISRLLKSQKNSLSVAESCTGGYVSQLITQVPGSSVYYQGGIVAYNNTAKHKILGVARNTLLQYGAVSQETAMEMARNVRLKLKANIGLATTGIAGPGGGTIEHPVGTIWIAYADENTCYAQKLQLTNNRLYNIQLTAYHLLDLLRKKLQGK.

Belongs to the CinA family.

The protein is CinA-like protein of Amoebophilus asiaticus (strain 5a2).